The following is a 68-amino-acid chain: DNA-directed RNA polymerase subunit omega (68 aa).

This sequence belongs to the RNA polymerase subunit omega family. The RNAP catalytic core consists of 2 alpha, 1 beta, 1 beta' and 1 omega subunit. When a sigma factor is associated with the core the holoenzyme is formed, which can initiate transcription.

It catalyses the reaction RNA(n) + a ribonucleoside 5'-triphosphate = RNA(n+1) + diphosphate. Promotes RNA polymerase assembly. Latches the N- and C-terminal regions of the beta' subunit thereby facilitating its interaction with the beta and alpha subunits. The polypeptide is DNA-directed RNA polymerase subunit omega (Chromobacterium violaceum (strain ATCC 12472 / DSM 30191 / JCM 1249 / CCUG 213 / NBRC 12614 / NCIMB 9131 / NCTC 9757 / MK)).